Here is a 548-residue protein sequence, read N- to C-terminus: CTP synthase (548 aa).

An amidoligase domain region spans residues 1–266 (MRVNYIFVTG…DNYICKRFNL (266 aa)). S14 is a binding site for CTP. S14 contacts UTP. Residues 15-20 (SLGKGI) and D72 each bind ATP. The Mg(2+) site is built by D72 and E140. Residues 147–149 (DIE), 187–192 (KTKPTQ), and K223 each bind CTP. UTP contacts are provided by residues 187 to 192 (KTKPTQ) and K223. The region spanning 291–543 (TVGMVGKYIE…IKAAIEYQHR (253 aa)) is the Glutamine amidotransferase type-1 domain. L-glutamine is bound at residue G353. C380 (nucleophile; for glutamine hydrolysis) is an active-site residue. Residues 381–384 (LGMQ), E404, and R471 each bind L-glutamine. Catalysis depends on residues H516 and E518.

It belongs to the CTP synthase family. Homotetramer.

The catalysed reaction is UTP + L-glutamine + ATP + H2O = CTP + L-glutamate + ADP + phosphate + 2 H(+). It carries out the reaction L-glutamine + H2O = L-glutamate + NH4(+). The enzyme catalyses UTP + NH4(+) + ATP = CTP + ADP + phosphate + 2 H(+). Its pathway is pyrimidine metabolism; CTP biosynthesis via de novo pathway; CTP from UDP: step 2/2. Allosterically activated by GTP, when glutamine is the substrate; GTP has no effect on the reaction when ammonia is the substrate. The allosteric effector GTP functions by stabilizing the protein conformation that binds the tetrahedral intermediate(s) formed during glutamine hydrolysis. Inhibited by the product CTP, via allosteric rather than competitive inhibition. Its function is as follows. Catalyzes the ATP-dependent amination of UTP to CTP with either L-glutamine or ammonia as the source of nitrogen. Regulates intracellular CTP levels through interactions with the four ribonucleotide triphosphates. The chain is CTP synthase from Blochmanniella pennsylvanica (strain BPEN).